Here is a 254-residue protein sequence, read N- to C-terminus: Flagellar L-ring protein 1 (254 aa).

The signal sequence occupies residues 1-26 (MSPFSSAFRPRRIAISALLLAIGALA).

Belongs to the FlgH family. In terms of assembly, the basal body constitutes a major portion of the flagellar organelle and consists of four rings (L,P,S, and M) mounted on a central rod.

The protein localises to the cell outer membrane. It localises to the bacterial flagellum basal body. In terms of biological role, assembles around the rod to form the L-ring and probably protects the motor/basal body from shearing forces during rotation. In Bradyrhizobium diazoefficiens (strain JCM 10833 / BCRC 13528 / IAM 13628 / NBRC 14792 / USDA 110), this protein is Flagellar L-ring protein 1 (flgH1).